A 155-amino-acid chain; its full sequence is dCTP deaminase (155 aa).

DCTP contacts are provided by residues 79 to 84 (RSSLAR), aspartate 95, glutamine 124, and tyrosine 138.

This sequence belongs to the dCTP deaminase family. Homotrimer.

It carries out the reaction dCTP + H2O + H(+) = dUTP + NH4(+). It participates in pyrimidine metabolism; dUMP biosynthesis; dUMP from dCTP (dUTP route): step 1/2. Catalyzes the deamination of dCTP to dUTP. The sequence is that of dCTP deaminase from Thermococcus kodakarensis (strain ATCC BAA-918 / JCM 12380 / KOD1) (Pyrococcus kodakaraensis (strain KOD1)).